The sequence spans 375 residues: MENFPTEYFLNTSVRLLEYIRYRDSNYTREERIENLHYAYNKAAHHFAQPRQQQMLKVDPKRLQASLQTIVGMVVYSWAKVSKECMADLSIHYTYTLVLDDSSDDPHPAMLNYFDDLQAGREQSHPWWALVNEHFPNVLRHFGPFCSLNLIRSTMDFFEGCWIEQYNFGGFPGSDDYPQFLRRMNGLGHCVGASLWPKDLFDERKNFLEITTAVAQMENWMVWVNDLMSFYKEFDDERDQISLVKNFVTCHEITLDEALEKLTQETLHSSKQMVAVFADKDPQVMDTIECFMHGYVTWHLCDARYRLHEIYEKVKDQDTEDAKKFCKFFEQAANVGAVAPSEWAYPQVAQLANVRAKDDMKEGQKPILSSIELVE.

It belongs to the trichodiene synthase family.

The catalysed reaction is (2E,6E)-farnesyl diphosphate = trichodiene + diphosphate. It functions in the pathway sesquiterpene biosynthesis; trichothecene biosynthesis. Its function is as follows. TS is a member of the terpene cyclase group of enzymes. It catalyzes the isomerization and cyclization of farnesyl pyro-phosphate to form trichodiene, the first cyclic intermediate in the biosynthetic pathway for trichothecenes. It serves to branch trichothecene biosynthesis from the isoprenoid pathway. In Fusarium mesoamericanum, this protein is Trichodiene synthase (TRI5).